We begin with the raw amino-acid sequence, 336 residues long: Pyridoxal 5'-phosphate synthase subunit PdxS (336 aa).

Asp30 is a D-ribose 5-phosphate binding site. The active-site Schiff-base intermediate with D-ribose 5-phosphate is Lys87. Position 159 (Gly159) interacts with D-ribose 5-phosphate. Residue Arg171 participates in D-glyceraldehyde 3-phosphate binding. Residues Gly257 and 278-279 each bind D-ribose 5-phosphate; that span reads GS.

The protein belongs to the PdxS/SNZ family. In the presence of PdxT, forms a dodecamer of heterodimers.

It carries out the reaction aldehydo-D-ribose 5-phosphate + D-glyceraldehyde 3-phosphate + L-glutamine = pyridoxal 5'-phosphate + L-glutamate + phosphate + 3 H2O + H(+). It participates in cofactor biosynthesis; pyridoxal 5'-phosphate biosynthesis. Its function is as follows. Catalyzes the formation of pyridoxal 5'-phosphate from ribose 5-phosphate (RBP), glyceraldehyde 3-phosphate (G3P) and ammonia. The ammonia is provided by the PdxT subunit. Can also use ribulose 5-phosphate and dihydroxyacetone phosphate as substrates, resulting from enzyme-catalyzed isomerization of RBP and G3P, respectively. This chain is Pyridoxal 5'-phosphate synthase subunit PdxS, found in Thermoplasma volcanium (strain ATCC 51530 / DSM 4299 / JCM 9571 / NBRC 15438 / GSS1).